The chain runs to 121 residues: Immunoglobulin kappa variable 4-1 (121 aa).

The N-terminal stretch at methionine 1–glycine 20 is a signal peptide. Residues aspartate 21–cysteine 43 are framework-1. One can recognise an Ig-like domain in the interval aspartate 21–proline 121. Cysteine 43 and cysteine 114 are oxidised to a cystine. Residues lysine 44–alanine 60 are complementarity-determining-1. The framework-2 stretch occupies residues tryptophan 61–tyrosine 75. Positions tryptophan 76–serine 82 are complementarity-determining-2. Residues glycine 83 to cysteine 114 are framework-3. The interval glutamine 115–proline 121 is complementarity-determining-3.

Immunoglobulins are composed of two identical heavy chains and two identical light chains; disulfide-linked.

The protein localises to the secreted. It localises to the cell membrane. Functionally, v segment of the variable domain of immunoglobulins light chain that participates in the antigen recognition. Immunoglobulins, also known as antibodies, are membrane-bound or secreted glycoproteins produced by B lymphocytes. In the recognition phase of humoral immunity, the membrane-bound immunoglobulins serve as receptors which, upon binding of a specific antigen, trigger the clonal expansion and differentiation of B lymphocytes into immunoglobulins-secreting plasma cells. Secreted immunoglobulins mediate the effector phase of humoral immunity, which results in the elimination of bound antigens. The antigen binding site is formed by the variable domain of one heavy chain, together with that of its associated light chain. Thus, each immunoglobulin has two antigen binding sites with remarkable affinity for a particular antigen. The variable domains are assembled by a process called V-(D)-J rearrangement and can then be subjected to somatic hypermutations which, after exposure to antigen and selection, allow affinity maturation for a particular antigen. The protein is Immunoglobulin kappa variable 4-1 of Homo sapiens (Human).